A 242-amino-acid polypeptide reads, in one-letter code: Ribonuclease PH (242 aa).

Phosphate is bound by residues Arg87 and 125 to 127 (STR).

Belongs to the RNase PH family. Homohexameric ring arranged as a trimer of dimers.

It carries out the reaction tRNA(n+1) + phosphate = tRNA(n) + a ribonucleoside 5'-diphosphate. In terms of biological role, phosphorolytic 3'-5' exoribonuclease that plays an important role in tRNA 3'-end maturation. Removes nucleotide residues following the 3'-CCA terminus of tRNAs; can also add nucleotides to the ends of RNA molecules by using nucleoside diphosphates as substrates, but this may not be physiologically important. Probably plays a role in initiation of 16S rRNA degradation (leading to ribosome degradation) during starvation. The polypeptide is Ribonuclease PH (Synechococcus sp. (strain JA-3-3Ab) (Cyanobacteria bacterium Yellowstone A-Prime)).